We begin with the raw amino-acid sequence, 82 residues long: Hydrogenase maturation factor HybG (82 aa).

Belongs to the HupF/HypC family.

It participates in protein modification; [NiFe] hydrogenase maturation. Its function is as follows. Involved in the maturation of [NiFe] hydrogenases. Involved in the biosynthesis of the Fe(CN)(2)CO cofactor. HybG delivers iron-bound CO(2) to HypD where reduction to CO probably occurs. In complex with HypD, accepts the cyanide ligand generated by HypF and HypE, and also coordinates the carbon monoxide ligand. The polypeptide is Hydrogenase maturation factor HybG (hybG) (Escherichia coli O157:H7).